The sequence spans 198 residues: SOSS complex subunit B2 (198 aa).

Residues 26 to 89 (IVLEIGRVTK…SMWKGCLTLY (64 aa)) constitute a DNA-binding region (OB). Residues 114-198 (EPNPDYRGQQ…ARDPRRAFKR (85 aa)) form a disordered region. Polar residues-rich tracts occupy residues 136-151 (STNTFGPVGNGDQTGP) and 173-188 (LPGTPSSQTVRTTISN).

Belongs to the SOSS-B family. SOSS-B2 subfamily. As to quaternary structure, component of the SOSS complex, composed of SOSS-B (SOSS-B1/NABP2 or SOSS-B2/NABP1), SOSS-A/INTS3 and SOSS-C/INIP. SOSS complexes containing SOSS-B1/NABP2 are more abundant than complexes containing SOSS-B2/NABP1. In terms of tissue distribution, ubiquitous with high expression in the thymus.

It is found in the nucleus. In terms of biological role, component of the SOSS complex, a multiprotein complex that functions downstream of the MRN complex to promote DNA repair and G2/M checkpoint. In the SOSS complex, acts as a sensor of single-stranded DNA that binds to single-stranded DNA, in particular to polypyrimidines. The SOSS complex associates with DNA lesions and influences diverse endpoints in the cellular DNA damage response including cell-cycle checkpoint activation, recombinational repair and maintenance of genomic stability. Required for efficient homologous recombination-dependent repair of double-strand breaks (DSBs) and ATM-dependent signaling pathways. This is SOSS complex subunit B2 (Nabp1) from Mus musculus (Mouse).